Consider the following 101-residue polypeptide: RNA-binding protein Hfq (101 aa).

Residues 9-68 (DPFLNALRRERVPVSIYLVNGIKLQGQIESFDQFVILLKNTVSQMVYKHAISTVVPSRPV) form the Sm domain. Residues 63–101 (VPSRPVSHHNNNPSGGSSNYHHGSTPASQPSQPESDDAE) are disordered. A compositionally biased stretch (low complexity) spans 70–86 (HHNNNPSGGSSNYHHGS).

This sequence belongs to the Hfq family. Homohexamer.

Functionally, RNA chaperone that binds small regulatory RNA (sRNAs) and mRNAs to facilitate mRNA translational regulation in response to envelope stress, environmental stress and changes in metabolite concentrations. Also binds with high specificity to tRNAs. The polypeptide is RNA-binding protein Hfq (Sodalis glossinidius (strain morsitans)).